Consider the following 282-residue polypeptide: Bis(5'-nucleosyl)-tetraphosphatase, symmetrical (282 aa).

The protein belongs to the Ap4A hydrolase family.

The catalysed reaction is P(1),P(4)-bis(5'-adenosyl) tetraphosphate + H2O = 2 ADP + 2 H(+). Functionally, hydrolyzes diadenosine 5',5'''-P1,P4-tetraphosphate to yield ADP. The chain is Bis(5'-nucleosyl)-tetraphosphatase, symmetrical from Burkholderia pseudomallei (strain 668).